Here is a 391-residue protein sequence, read N- to C-terminus: Phosphoglycerate kinase (391 aa).

Substrate contacts are provided by residues 21 to 23, R36, 59 to 62, R113, and R146; these read DLN and HLGR. ATP-binding positions include K197, E319, and 345–348; that span reads GGDT.

This sequence belongs to the phosphoglycerate kinase family. In terms of assembly, monomer.

Its subcellular location is the cytoplasm. The enzyme catalyses (2R)-3-phosphoglycerate + ATP = (2R)-3-phospho-glyceroyl phosphate + ADP. Its pathway is carbohydrate degradation; glycolysis; pyruvate from D-glyceraldehyde 3-phosphate: step 2/5. The chain is Phosphoglycerate kinase from Xylella fastidiosa (strain Temecula1 / ATCC 700964).